Consider the following 291-residue polypeptide: Tyrosine recombinase XerA (291 aa).

The region spanning 9–102 (PESGDLYNAF…AVRRFLKWIN (94 aa)) is the Core-binding (CB) domain. Positions 115–279 (KEVKALDEIQ…VLDDLRNEYL (165 aa)) constitute a Tyr recombinase domain. Active-site residues include arginine 150, lysine 175, histidine 231, arginine 234, and histidine 257. The O-(3'-phospho-DNA)-tyrosine intermediate role is filled by tyrosine 266.

It belongs to the 'phage' integrase family. XerA subfamily.

The protein resides in the cytoplasm. Functionally, site-specific tyrosine recombinase, which acts by catalyzing the cutting and rejoining of the recombining DNA molecules. Probably involved in the resolution of chromosome dimers. Binds to the dif site. This is Tyrosine recombinase XerA from Saccharolobus solfataricus (strain ATCC 35092 / DSM 1617 / JCM 11322 / P2) (Sulfolobus solfataricus).